We begin with the raw amino-acid sequence, 144 residues long: Major allergen Blo t 12 (144 aa).

An N-terminal signal peptide occupies residues 1–20 (MKSVLIFLVAIALFSANIVS). The disordered stretch occupies residues 24–77 (QTTRGRHTEPDDHHEKPTTQCTHEETTSTQHHHEEVVTTQTPHHEEKTTTEETH). Positions 92 to 144 (HVVCHEEGPIHIQEMCNKYIICSKSGSLWYITVMPCSIGTKFDPISRNCVLDN) constitute a Chitin-binding type-2 domain. Cysteines 127 and 140 form a disulfide.

The polypeptide is Major allergen Blo t 12 (Blomia tropicalis (Mite)).